We begin with the raw amino-acid sequence, 243 residues long: 7-cyano-7-deazaguanine synthase (243 aa).

18-28 (FSGGQDSATCL) is an ATP binding site. Positions 206, 221, 224, and 227 each coordinate Zn(2+).

The protein belongs to the QueC family. Zn(2+) is required as a cofactor.

The enzyme catalyses 7-carboxy-7-deazaguanine + NH4(+) + ATP = 7-cyano-7-deazaguanine + ADP + phosphate + H2O + H(+). The protein operates within purine metabolism; 7-cyano-7-deazaguanine biosynthesis. Its function is as follows. Catalyzes the ATP-dependent conversion of 7-carboxy-7-deazaguanine (CDG) to 7-cyano-7-deazaguanine (preQ(0)). This chain is 7-cyano-7-deazaguanine synthase, found in Methylorubrum extorquens (strain CM4 / NCIMB 13688) (Methylobacterium extorquens).